Here is a 338-residue protein sequence, read N- to C-terminus: tRNA (cytosine(34)-C(5))-methyltransferase, mitochondrial (338 aa).

Residues 140-146, E163, D194, and D212 contribute to the S-adenosyl-L-methionine site; that span reads CAAPGGK. C266 serves as the catalytic Nucleophile.

It belongs to the class I-like SAM-binding methyltransferase superfamily. RsmB/NOP family.

It localises to the mitochondrion matrix. The enzyme catalyses cytidine(34) in mitochondrial tRNA + S-adenosyl-L-methionine = 5-methylcytidine(34) in mitochondrial tRNA + S-adenosyl-L-homocysteine + H(+). Mitochondrial tRNA methyltransferase that mediates methylation of cytosine to 5-methylcytosine (m5C) at position 34 of mt-tRNA(Met). mt-tRNA(Met) methylation at cytosine(34) takes place at the wobble position of the anticodon and initiates the formation of 5-formylcytosine (f(5)c) at this position. mt-tRNA(Met) containing the f(5)c modification at the wobble position enables recognition of the AUA codon in addition to the AUG codon, expanding codon recognition in mitochondrial translation. This Bos taurus (Bovine) protein is tRNA (cytosine(34)-C(5))-methyltransferase, mitochondrial.